A 189-amino-acid chain; its full sequence is Probable DNA-directed RNA polymerase subunit delta (189 aa).

In terms of domain architecture, HTH HARE-type spans 14-81 (LSMIEVAHAI…GENVWALRTW (68 aa)). 2 stretches are compositionally biased toward acidic residues: residues 90–100 (EVDHPEDDGDE) and 118–189 (EGDD…EDEE). The disordered stretch occupies residues 90-189 (EVDHPEDDGD…DDLDDDEDEE (100 aa)).

It belongs to the RpoE family. As to quaternary structure, RNAP is composed of a core of 2 alpha, a beta and a beta' subunits. The core is associated with a delta subunit and one of several sigma factors.

In terms of biological role, participates in both the initiation and recycling phases of transcription. In the presence of the delta subunit, RNAP displays an increased specificity of transcription, a decreased affinity for nucleic acids, and an increased efficiency of RNA synthesis because of enhanced recycling. This is Probable DNA-directed RNA polymerase subunit delta from Lactobacillus delbrueckii subsp. bulgaricus (strain ATCC 11842 / DSM 20081 / BCRC 10696 / JCM 1002 / NBRC 13953 / NCIMB 11778 / NCTC 12712 / WDCM 00102 / Lb 14).